Reading from the N-terminus, the 174-residue chain is Peptidyl-prolyl cis-trans isomerase-like 1 (174 aa).

The region spanning 5-159 (SPTYVTFDTS…EEIKIHRARL (155 aa)) is the PPIase cyclophilin-type domain.

Belongs to the cyclophilin-type PPIase family. PPIL1 subfamily.

It carries out the reaction [protein]-peptidylproline (omega=180) = [protein]-peptidylproline (omega=0). In terms of biological role, PPIases accelerate the folding of proteins. It catalyzes the cis-trans isomerization of proline imidic peptide bonds in oligopeptides. The sequence is that of Peptidyl-prolyl cis-trans isomerase-like 1 (CYP1) from Cryptococcus neoformans var. neoformans serotype D (strain B-3501A) (Filobasidiella neoformans).